Consider the following 261-residue polypeptide: Cytochrome c oxidase subunit 3 (261 aa).

Residues 1 to 15 (MAHQAHAYHMVDPSP) are Mitochondrial matrix-facing. Residues 16-34 (WPLTGAIAALLMTSGLAIW) traverse the membrane as a helical segment. Residues 35-40 (FHFHST) lie on the Mitochondrial intermembrane side of the membrane. A helical transmembrane segment spans residues 41–66 (TLMTLGLILLLLTMYQWWRDIIREGT). At 67-72 (FQGHHT) the chain is on the mitochondrial matrix side. The helical transmembrane segment at 73 to 105 (PPVQKGLRYGMILFITSEVFFFLGFFWAFYHSS) threads the bilayer. The Mitochondrial intermembrane portion of the chain corresponds to 106-128 (LAPTPELGGCWPPTGITPLDPFE). A helical transmembrane segment spans residues 129–152 (VPLLNTAVLLASGVTVTWAHHSIM). Topologically, residues 153-155 (EGE) are mitochondrial matrix. A helical transmembrane segment spans residues 156-183 (RKQAIQSLALTILLGFYFTALQAMEYYE). Residues 184-190 (APFTIAD) are Mitochondrial intermembrane-facing. Residues 191–223 (GVYGSTFFVATGFHGLHVIIGSTFLAVCLLRQI) traverse the membrane as a helical segment. The Mitochondrial matrix segment spans residues 224-232 (QYHFTSEHH). The helical transmembrane segment at 233-256 (FGFEAAAWYWHFVDVVWLFLYVSI) threads the bilayer. At 257–261 (YWWGS) the chain is on the mitochondrial intermembrane side.

Belongs to the cytochrome c oxidase subunit 3 family. Component of the cytochrome c oxidase (complex IV, CIV), a multisubunit enzyme composed of 14 subunits. The complex is composed of a catalytic core of 3 subunits MT-CO1, MT-CO2 and MT-CO3, encoded in the mitochondrial DNA, and 11 supernumerary subunits COX4I, COX5A, COX5B, COX6A, COX6B, COX6C, COX7A, COX7B, COX7C, COX8 and NDUFA4, which are encoded in the nuclear genome. The complex exists as a monomer or a dimer and forms supercomplexes (SCs) in the inner mitochondrial membrane with NADH-ubiquinone oxidoreductase (complex I, CI) and ubiquinol-cytochrome c oxidoreductase (cytochrome b-c1 complex, complex III, CIII), resulting in different assemblies (supercomplex SCI(1)III(2)IV(1) and megacomplex MCI(2)III(2)IV(2)).

The protein localises to the mitochondrion inner membrane. It catalyses the reaction 4 Fe(II)-[cytochrome c] + O2 + 8 H(+)(in) = 4 Fe(III)-[cytochrome c] + 2 H2O + 4 H(+)(out). Its function is as follows. Component of the cytochrome c oxidase, the last enzyme in the mitochondrial electron transport chain which drives oxidative phosphorylation. The respiratory chain contains 3 multisubunit complexes succinate dehydrogenase (complex II, CII), ubiquinol-cytochrome c oxidoreductase (cytochrome b-c1 complex, complex III, CIII) and cytochrome c oxidase (complex IV, CIV), that cooperate to transfer electrons derived from NADH and succinate to molecular oxygen, creating an electrochemical gradient over the inner membrane that drives transmembrane transport and the ATP synthase. Cytochrome c oxidase is the component of the respiratory chain that catalyzes the reduction of oxygen to water. Electrons originating from reduced cytochrome c in the intermembrane space (IMS) are transferred via the dinuclear copper A center (CU(A)) of subunit 2 and heme A of subunit 1 to the active site in subunit 1, a binuclear center (BNC) formed by heme A3 and copper B (CU(B)). The BNC reduces molecular oxygen to 2 water molecules using 4 electrons from cytochrome c in the IMS and 4 protons from the mitochondrial matrix. This is Cytochrome c oxidase subunit 3 (mt-co3) from Carassius auratus (Goldfish).